A 404-amino-acid polypeptide reads, in one-letter code: Floricaula/leafy-like protein FL1 (404 aa).

A disordered region spans residues 210–251 (IGVPEHSSESDERKADTNKQKRRRSKEPGEDGEDRPREHPFI). 2 stretches are compositionally biased toward basic and acidic residues: residues 215-228 (HSSESDERKADTNK) and 235-249 (KEPGEDGEDRPREHP). DNA-binding regions lie at residues 246-250 (REHPF), 315-322 (NKPKMRHY), and 386-389 (YVPT).

This sequence belongs to the FLO/LFY family. Expressed in both male and female cones, vegetative buds and needles, but not in the roots.

It localises to the nucleus. Functionally, probable transcription factor. The sequence is that of Floricaula/leafy-like protein FL1 from Pinus radiata (Monterey pine).